Here is a 206-residue protein sequence, read N- to C-terminus: ATP-dependent dethiobiotin synthetase BioD (206 aa).

12-17 contacts ATP; it reads DSGKTL. A Mg(2+)-binding site is contributed by Thr-16. The active site involves Lys-32. Residue Glu-99 coordinates Mg(2+). 99–102 serves as a coordination point for ATP; it reads EGAG.

This sequence belongs to the dethiobiotin synthetase family. Homodimer. Mg(2+) is required as a cofactor.

The protein resides in the cytoplasm. The enzyme catalyses (7R,8S)-7,8-diammoniononanoate + CO2 + ATP = (4R,5S)-dethiobiotin + ADP + phosphate + 3 H(+). The protein operates within cofactor biosynthesis; biotin biosynthesis; biotin from 7,8-diaminononanoate: step 1/2. Catalyzes a mechanistically unusual reaction, the ATP-dependent insertion of CO2 between the N7 and N8 nitrogen atoms of 7,8-diaminopelargonic acid (DAPA, also called 7,8-diammoniononanoate) to form a ureido ring. The polypeptide is ATP-dependent dethiobiotin synthetase BioD (Cytophaga hutchinsonii (strain ATCC 33406 / DSM 1761 / CIP 103989 / NBRC 15051 / NCIMB 9469 / D465)).